We begin with the raw amino-acid sequence, 203 residues long: Imidazoleglycerol-phosphate dehydratase (203 aa).

It belongs to the imidazoleglycerol-phosphate dehydratase family.

The protein resides in the cytoplasm. The enzyme catalyses D-erythro-1-(imidazol-4-yl)glycerol 3-phosphate = 3-(imidazol-4-yl)-2-oxopropyl phosphate + H2O. Its pathway is amino-acid biosynthesis; L-histidine biosynthesis; L-histidine from 5-phospho-alpha-D-ribose 1-diphosphate: step 6/9. The polypeptide is Imidazoleglycerol-phosphate dehydratase (Deinococcus geothermalis (strain DSM 11300 / CIP 105573 / AG-3a)).